The chain runs to 2282 residues: MVIRGVCDSISRDIASSAVTGKRHTTQMSIFKTIARGHGRFKARSSRQFIVSTVCELLLARHKDRGSQLIVASNLRLVLSHKPHLEHLLWDHYRRSVACLCRELSALCVNSMEESGLEMLIQELLLCLDLLTKPKYVGMAELKHDLWNCIDSMLYKYKEVSEMHVLILSISVSLFQVVFGSDYEICHEMVPSIFAIGTKLFTSKSKAVREISLRFLLKMEIYLASIFGKTCPVPLDQDRLNQIEDHMVELLQVLKNEYNSSSLQDNDVVFEDEIVLVNSKKTMQFLICKLIAMLEYVLSYTLTDGNVKQEEDLHGPRKKPRVSISPETPTLNAISAQIQAFQASKPISEVDKPLASLLSSISGSLDKTTRWKFFSAAKLLAQSPPLSPKNAHDVVFLTKWWTEGVAKLRTRSEDSACVLLTTILRQHSSALDPKLVVSLASNAESKGPLKYSNVSLEFVTCASQFLISHKACSQSQWSDWLFVVLASEQIGATSSKMMLDTAGLLLASVGCLIRMIETPQNTLETTTSSIMWKTDFKTTSSTSGDIELTECMPSITIRDLKSGFQNYLNELGDWCESASIDVNVVLPSTVFALVVCAVLDRQGTPVGLNSRISDFLAVVTKRVEGGSCDSHVFFEAITLINRLRHYNLLGDSLCILWDSFINGIEKLLNVSQVTENEFDPDSPSGKNIMPDLRLSLLLRGPLKSEPFLLAIFPSDIKQYASCDPGKRLPELFRYVGQTLLSSYLWDCSPLAKQLVVDLLDVYFKSGMTESSDADDLQRWVSRDKFLVGPQLLYGLMQVSTPSEYLNLYSSVAICAAERVSSQDSYHCMDATLTRMSSAKSKSRLVVEEMIVALLSVHRECLSLLPVVIERVKTDMLRQKLDTDSESLVRFCKQTGTDSILDKILSVKVGSCVFEEEGHFSTQQLLCSEDSLQWNTQGPPLDILSRTWPDYSPCTLLMLVRGLLNLMLKPRVSFEVPLRLVQLKYVLCLFPKRDLCSPDNYVLQQMVSCLISFLSHSTVGASVRHLLSELFEVIKLPHLEGYIADLGEQSFFGADVSQLLYLLHPSEPHLCKYIEWVNSGFSDPEAFLSVFLHTEISDKLKATLLKSLDFGVTNMTLLGLMDIVCTKETVSFIKRASKLYSFDWEESRVLSLLLGRGYLLFGESSNSAPKTNTETSFWNALTSEFLTLLRGSDFTAKFAVEVCLSKIVTKVQVQVPAELQHVFDSGVLEYTHTDEPTTGWVQKTTLELLGLLGGDFELLIPLVRTLSSTSPLLPFIFKWTCLEYCRQGEPSYLSQILSQNSSLVVIETFFFVNSFTAHRTLNWQPEIVNSALTLHLYTEALYFLEADKACWASQEIQPSYYDIYQNIDDPDLFYGLKFTPCLESALKQLNHENQNLTCFEYESGLFDWSVETGGGESKTDILSHLSTSGMNGLAYTINSDDVYRWKLGLLEDPILETGTDDQTVLSQLRSIVVDEKPVLKSTLSDKYLGMQYLLYQMQLDANSDYLDRIQPPDGVLDILQFCASAWRTIKTETASYNGILTLSKLGAVSRELNNAQISKNCAVSLQELSRTASHISGNVCAISIASCLWSEAAVSRTTPVEMLKRMLGSINPGQSPVLASQFCQATVLLTDWSSQARMMSPEKIHRLYIAGASEYMALIPAGNPKTRMFHVFAKFCETQLHSQNYDEQIHNAVMDIERLEGELANLSRISMTREIKHAQRISRKSLDRAKESKLNYERLKAMFLDSAVQFYLLSCAVRDSEYHEDVTRLISLWFGNSHVNFVNERMQDYALIPSFKLAPLINQLSSKLSYEPNNYFQTLLLDLVSATCKAHPFHCLYQISSLMRTDASPQTERRIQAAVKVWNTVKTQEKTICRAMEIFTDKCVELANAEWPGKGQKASINQFPNGSWWQNGLRKLNIPPPTAQIPLSLDYTDIPSMNKVLAQVIKAGGISHPKIMDFQLSDGSVSKALLKGGKDDMRQDAIMEQVFCRVNQYFLGDPETRKRGLSIRTYNVVPMGPRAGMIEFVANTESLQAALVPLHEKDDWDYLTGRTKMSAVAKESNSRRVEVLEEIYTHVTPVMSQYFFQNFRSSAQAWFKARTNYVRSAAASSMLGYILGIGDRHCNNIMIDYKTGQLVHIDLGISFDQGKNLTVPEKVPFRLTRDMVDAMGSVGVDGPFRRCCELSLGLFREQQDNILSILNVLRYDPLYSWTMSPKKKQTRSSSGSDLSDIKLEESNVTADMCLSGVKGKLAVRLSTEAVVRELIGEAVSVENLAVIFHGWTPFY.

The region spanning 1325–1844 (EIVNSALTLH…LYQISSLMRT (520 aa)) is the FAT domain. Residues 1939-2250 (VLAQVIKAGG…LSGVKGKLAV (312 aa)) enclose the PI3K/PI4K catalytic domain. The segment at 1945–1951 (KAGGISH) is G-loop. Residues 2115-2123 (GIGDRHCNN) are catalytic loop. Positions 2135–2159 (HIDLGISFDQGKNLTVPEKVPFRLT) are activation loop. The region spanning 2250–2282 (VRLSTEAVVRELIGEAVSVENLAVIFHGWTPFY) is the FATC domain.

It belongs to the PI3/PI4-kinase family. ATM subfamily. As to quaternary structure, associates with DNA double-strand breaks.

Its subcellular location is the nucleus. The protein localises to the chromosome. It localises to the telomere. It catalyses the reaction L-seryl-[protein] + ATP = O-phospho-L-seryl-[protein] + ADP + H(+). The catalysed reaction is L-threonyl-[protein] + ATP = O-phospho-L-threonyl-[protein] + ADP + H(+). Its function is as follows. Serine/threonine protein kinase which activates checkpoint signaling upon genotoxic stresses such as ionizing radiation (IR), ultraviolet light (UV), or DNA replication stalling, thereby acting as a DNA damage sensor. Recognizes the substrate consensus sequence [ST]-Q. Phosphorylates histone H2A to form H2AS128ph (gamma-H2A) at sites of DNA damage, involved in the regulation of DNA damage response mechanism. Required for the control of telomere length and genome stability. The protein is Serine/threonine-protein kinase TEL1 (TEL1) of Yarrowia lipolytica (strain CLIB 122 / E 150) (Yeast).